Reading from the N-terminus, the 216-residue chain is Ethylene-inducing xylanase (216 aa).

The first 19 residues, 1 to 19 (MVSFSSLFVAACAAVTAFA), serve as a signal peptide directing secretion. Residues 28 to 216 (AITTSQQGTS…SSGSSDITVS (189 aa)) form the GH11 domain. Glutamate 112 (nucleophile) is an active-site residue. Glutamate 203 serves as the catalytic Proton donor.

It belongs to the glycosyl hydrolase 11 (cellulase G) family.

Its subcellular location is the secreted. It catalyses the reaction Endohydrolysis of (1-&gt;4)-beta-D-xylosidic linkages in xylans.. It participates in glycan degradation; xylan degradation. Endo-1,4-beta-xylanase involved in the hydrolysis of xylan, a major structural heterogeneous polysaccharide found in plant biomass representing the second most abundant polysaccharide in the biosphere, after cellulose. Acts as a pathogen-associated molecular pattern (PAMP) that can trigger plant cell death. Triggers a series of immune responses in citrus fruit and enhanced the resistance of citrus and other fruit against fungal pathogens. The chain is Ethylene-inducing xylanase from Penicillium digitatum (strain Pd1 / CECT 20795) (Green mold).